Consider the following 689-residue polypeptide: Glycine--tRNA ligase beta subunit (689 aa).

It belongs to the class-II aminoacyl-tRNA synthetase family. Tetramer of two alpha and two beta subunits.

The protein localises to the cytoplasm. It carries out the reaction tRNA(Gly) + glycine + ATP = glycyl-tRNA(Gly) + AMP + diphosphate. The polypeptide is Glycine--tRNA ligase beta subunit (Shewanella baltica (strain OS185)).